We begin with the raw amino-acid sequence, 258 residues long: MQALHLQHRNPRSYRVKARASYVDETLFGSPTGTRPTLPDFDPPWVQNCNRSRGVSPGPPKVSLAKRDCESPSSRGSTPNLTPRKKNKYRLIGHTPSYCDESLFGSRPQGTSKERSRTAVEDAAKLRTLFWTPPATPRGSHSPRPRETPLRAIHPTGPPRTEPRVATGSQMVSRDGLDAPRSLGQRRSYSLTHLAVPSTGHPASTAPQTNGPWSPRPYTSGATVQSPLVTRKVCSGSVSGPTTPQRGACPQKPKPPWK.

3 disordered regions span residues 28–86 (FGSP…PRKK), 132–182 (TPPA…APRS), and 195–258 (AVPS…PPWK). Polar residues predominate over residues 71 to 81 (SPSSRGSTPNL). The Nuclear localization signal signature appears at 81–97 (LTPRKKNKYRLIGHTPS). The tract at residues 117–145 (RTAVEDAAKLRTLFWTPPATPRGSHSPRP) is interaction with RBPJ/RBPSUH. The tract at residues 145 to 258 (PRETPLRAIH…CPQKPKPPWK (114 aa)) is interaction with tubulin. Composition is skewed to polar residues over residues 201 to 212 (HPASTAPQTNGP) and 236 to 245 (GSVSGPTTPQ).

Belongs to the RITA family. Interacts with RBPJ/RBPSUH.

Its subcellular location is the cytoplasm. It localises to the nucleus. The protein resides in the cytoskeleton. It is found in the microtubule organizing center. The protein localises to the centrosome. Tubulin-binding protein that acts as a negative regulator of Notch signaling pathway. Shuttles between the cytoplasm and the nucleus and mediates the nuclear export of RBPJ/RBPSUH, thereby preventing the interaction between RBPJ/RBPSUH and NICD product of Notch proteins (Notch intracellular domain), leading to down-regulate Notch-mediated transcription. May play a role in neurogenesis. This is RBPJ-interacting and tubulin-associated protein 1 (Rita1) from Rattus norvegicus (Rat).